Consider the following 155-residue polypeptide: Calmodulin, flagellar (155 aa).

EF-hand domains lie at 14-49, 50-85, 87-122, and 123-155; these read EQIA…LGQN, PTEA…KMKD, DNEE…LGEK, and LTDE…MMQK. The Ca(2+) site is built by aspartate 27, aspartate 29, aspartate 31, threonine 33, glutamate 38, aspartate 63, aspartate 65, asparagine 67, threonine 69, glutamate 74, aspartate 100, aspartate 102, asparagine 104, glutamate 111, aspartate 136, aspartate 138, aspartate 140, glutamine 142, and glutamate 147.

This sequence belongs to the calmodulin family.

It localises to the cell projection. The protein localises to the cilium. The protein resides in the flagellum. In terms of biological role, calmodulin mediates the control of a large number of enzymes, ion channels and other proteins by Ca(2+). Among the enzymes to be stimulated by the calmodulin-Ca(2+) complex are a number of protein kinases and phosphatases. In Naegleria gruberi (Amoeba), this protein is Calmodulin, flagellar (CAM1).